We begin with the raw amino-acid sequence, 490 residues long: Glutamate--tRNA ligase (490 aa).

The 'HIGH' region signature appears at 13–23; the sequence is PSPTGTPHVGL. Residues 257 to 261 carry the 'KMSKS' region motif; the sequence is KLSKR. Lysine 260 serves as a coordination point for ATP.

This sequence belongs to the class-I aminoacyl-tRNA synthetase family. Glutamate--tRNA ligase type 1 subfamily. As to quaternary structure, monomer.

The protein localises to the cytoplasm. The catalysed reaction is tRNA(Glu) + L-glutamate + ATP = L-glutamyl-tRNA(Glu) + AMP + diphosphate. In terms of biological role, catalyzes the attachment of glutamate to tRNA(Glu) in a two-step reaction: glutamate is first activated by ATP to form Glu-AMP and then transferred to the acceptor end of tRNA(Glu). The protein is Glutamate--tRNA ligase of Mycobacterium bovis (strain BCG / Pasteur 1173P2).